The chain runs to 634 residues: Ankyrin repeat and SOCS box protein 2 (634 aa).

Residues 26 to 45 (SEEELVQMAIEQSLADKTRG) form the UIM domain. The tract at residues 35–81 (IEQSLADKTRGPTPAETSVSSQTNHQPGHIHPWTRSSSPPESPPARA) is disordered. Over residues 49–60 (AETSVSSQTNHQ) the composition is skewed to polar residues. ANK repeat units lie at residues 104–133 (AAMD…NLAE), 137–167 (EGWL…TIDQ), 171–200 (QEET…EPDI), 204–233 (SRET…DANH), 237–266 (RGWT…KVEA), 270–299 (YSIT…DINT), 303–332 (DSAS…DANK), 336–365 (DGLL…RTRV), 368–397 (SGIS…DVNT), 410–439 (RRTS…DPNR), 440–469 (DVIS…NIDA), and 476–504 (TAFP…DGEP). Residue S371 is modified to Phosphoserine. An SOCS box domain is found at 580–634 (EDWAVIKEKAEPPRPLAHLCRLRVRKAIGKYRIKLLDTLPLPGRLIRYLKYENTQ).

This sequence belongs to the ankyrin SOCS box (ASB) family. Component of a probable ECS E3 ubiquitin-protein ligase complex which contains CUL5, either RBX1 or RNF7/RBX2, Elongin BC complex (ELOB and ELOC) and ASB2. Interacts with SKP2. Through its interaction with SKP2, likely to bridge the formation of dimeric E3-ubiquitin-protein ligase complexes composed of an ECS complex and an SCF(SKP2) complex. Interacts with JAK2; the interaction targets JAK2 for Notch-mediated proteasomal degradation. Interacts with TCF3/E2A; the interaction is mediated by SKP2 and targets TCF3 for Notch-mediated proteasomal degradation. Interacts with DES. Post-translationally, monoubiquitinated.

Its subcellular location is the cytoplasm. It localises to the cytoskeleton. The protein resides in the stress fiber. It is found in the myofibril. The protein localises to the sarcomere. Its subcellular location is the z line. The protein operates within protein modification; protein ubiquitination. In terms of biological role, substrate-recognition component of a SCF-like ECS (Elongin-Cullin-SOCS-box protein) E3 ubiquitin-protein ligase complex which mediates the ubiquitination and subsequent proteasomal degradation of target proteins. Mediates Notch-induced ubiquitination and degradation of substrates including E2A and JAK2. Required during embryonic heart development for complete heart looping. Required for cardiomyocyte differentiation. Involved in myogenic differentiation and targets filamin FLNB for proteasomal degradation but not filamin FLNA. Also targets DES for proteasomal degradation. Acts as a negative regulator of skeletal muscle mass. In Rattus norvegicus (Rat), this protein is Ankyrin repeat and SOCS box protein 2.